The following is a 266-amino-acid chain: L-cystine-binding protein TcyJ (266 aa).

Positions 1–29 (MKLAHLGRQALMGVMAVALVAGMSVKSFA) are cleaved as a signal peptide.

Belongs to the bacterial solute-binding protein 3 family. The complex is composed of two ATP-binding proteins (TcyN), two transmembrane proteins (TcyL) and a solute-binding protein (TcyJ).

It is found in the periplasm. In terms of biological role, part of the ABC transporter complex TcyJLN involved in L-cystine import. Binds cystine. The protein is L-cystine-binding protein TcyJ of Escherichia coli O6:H1 (strain CFT073 / ATCC 700928 / UPEC).